Here is a 708-residue protein sequence, read N- to C-terminus: MFLLHFPSALIILVPSHRIAFTMSTDHSARSPRLRACVRCQQRKVRCDHKSPCGNCVASDSQCVPATLTPRRRRFQERVLLDRLRHYEGLLRQHNIYFEPLHPQAKQEPVIADVPRDCERSETARAQTPVQSQAVDLWQAISRVTLEPEDDDGDSPDVQADGVENAWDHHVDQPEANDQTGDDLLFGQPQANVNVLALHPEQAQIFRLWQTYLENVNPLLKVTHTPTLQPRIVDAVSDLGDIHPTLEALMFSIYCIAVMSLADNECHRLLKSSKEDLLARYRLGCRQVLIKCRPWQFTNVDGLTAVYLYLVSVSPQTDPRSLSSMLAAALRIAQRMGLHNESTYTRYTAVEAEMRRRLWWSLVIFDHRMCEMSDYKVTTLTPTWDCRIPLNKPTEALFAVVRSELADLIRHTTFHINFVNPVLAAVAKAKDPGHVSISADGEMLTIQRAIEEKYLAFCDPADPLHFMTIWTTRGYLARNRLLEHYARHLSSPAMQQTDAQRNAALSYALEMLECDTRLRVSPLTCRYRWLVDFHVPALAYIHVLNDLRKRPTESHAGKAWQAMSENYEARAMHPKPSGQGVFTVFARVVLQAWGAREIFLRQRGMPVEAPQIVLDIRSKVGQTSSGSSMVPSCSTGEPSHSSIAISAHSEAIPAQMNFTGHSADGQAFPGPDLGPSSFPDVAGPPGMDIDIDQFWTAMDWRLMHTQAW.

Positions 37-63 (CVRCQQRKVRCDHKSPCGNCVASDSQC) form a DNA-binding region, zn(2)-C6 fungal-type.

The protein resides in the nucleus. In terms of biological role, transcriptional regulator; part of the gene cluster that mediates the biosynthesis of the tetrahydroxanthone dimer neosartorin, which exhibits antibacterial activity. The sequence is that of Transcriptional regulator nsrM from Aspergillus novofumigatus (strain IBT 16806).